The primary structure comprises 260 residues: Ras-related protein Rab-32B (260 aa).

A disordered region spans residues 11–50 (FDTDPDVSTDSNYNNNNNSNNNNSIISNSNNNNNNNNNNV). The segment covering 21–49 (SNYNNNNNSNNNNSIISNSNNNNNNNNNN) has biased composition (low complexity). Residue 66-73 (GDYAVGKS) coordinates GTP. An Effector region motif is present at residues 88–96 (YKLTIGVDF). GTP is bound by residues 115-119 (DIAGH) and 177-180 (NKSD). Residues 231-260 (TNHPPKPEEDTLELTKTNGEKSDDSKSCCK) are disordered. The segment covering 248-260 (NGEKSDDSKSCCK) has biased composition (basic and acidic residues). 2 S-geranylgeranyl cysteine lipidation sites follow: cysteine 258 and cysteine 259.

It belongs to the small GTPase superfamily. Rab family.

This is Ras-related protein Rab-32B (rab32B) from Dictyostelium discoideum (Social amoeba).